The primary structure comprises 520 residues: Dual specificity tyrosine-phosphorylation-regulated kinase 4 (520 aa).

The segment at M1–Q32 is disordered. A Bipartite nuclear localization signal motif is present at residues T19–T37. Positions Q20 to P29 are enriched in basic and acidic residues. The region spanning Y104–I400 is the Protein kinase domain. Residues I110–V118, K133, and F183–L186 contribute to the ATP site. The active-site Proton acceptor is D230. Phosphotyrosine; by autocatalysis is present on Y264. The interval R404–Q467 is disordered. Residues R439–T457 show a composition bias toward basic and acidic residues.

This sequence belongs to the protein kinase superfamily. CMGC Ser/Thr protein kinase family. MNB/DYRK subfamily. Mg(2+) is required as a cofactor. Autophosphorylation on Tyr-264 in the activation loop is required for kinase activity.

The protein resides in the cytoplasm. Its subcellular location is the nucleus. It carries out the reaction L-seryl-[protein] + ATP = O-phospho-L-seryl-[protein] + ADP + H(+). The catalysed reaction is L-threonyl-[protein] + ATP = O-phospho-L-threonyl-[protein] + ADP + H(+). It catalyses the reaction L-tyrosyl-[protein] + ATP = O-phospho-L-tyrosyl-[protein] + ADP + H(+). In terms of biological role, possible non-essential role in spermiogenesis. This is Dual specificity tyrosine-phosphorylation-regulated kinase 4 (DYRK4) from Homo sapiens (Human).